The primary structure comprises 223 residues: Endonuclease V (223 aa).

Mg(2+) contacts are provided by aspartate 35 and aspartate 103.

Belongs to the endonuclease V family. It depends on Mg(2+) as a cofactor.

It is found in the cytoplasm. It carries out the reaction Endonucleolytic cleavage at apurinic or apyrimidinic sites to products with a 5'-phosphate.. In terms of biological role, DNA repair enzyme involved in the repair of deaminated bases. Selectively cleaves double-stranded DNA at the second phosphodiester bond 3' to a deoxyinosine leaving behind the intact lesion on the nicked DNA. The sequence is that of Endonuclease V from Salmonella schwarzengrund (strain CVM19633).